The primary structure comprises 755 residues: Zinc transporter ZIP6 (755 aa).

The signal sequence occupies residues 1–28; the sequence is MARKLSVILILTFALSVTNPLHELKAAA. The Extracellular segment spans residues 29–325; the sequence is FPQTTEKISP…PKTYSLQIAW (297 aa). A glycan (N-linked (GlcNAc...) asparagine) is linked at N67. A compositionally biased stretch (basic and acidic residues) spans 95–128; the sequence is DHDHHSDHEHHSDHERHSDHEHHSEHEHHSDHDH. 2 disordered regions span residues 95-186 and 202-246; these read DHDH…SASE and LETI…SVSE. The segment covering 129–144 has biased composition (basic residues); sequence HSHHNHAASGKNKRKA. Composition is skewed to basic and acidic residues over residues 145–159 and 167–179; these read LCPD…KDPR and HRPE…RNVK. The span at 219 to 234 shows a compositional bias: low complexity; it reads SSSTPPSVTSKSRVSR. N-linked (GlcNAc...) asparagine glycans are attached at residues N241, N266, and N283. A helical transmembrane segment spans residues 326 to 346; it reads VGGFIAISIISFLSLLGVILV. Residues 347–355 are Cytoplasmic-facing; sequence PLMNRVFFK. Residues 356–376 traverse the membrane as a helical segment; that stretch reads FLLSFLVALAVGTLSGDAFLH. The Extracellular portion of the chain corresponds to 377-423; the sequence is LLPHSHASHHHSHSHEEPAMEMKRGPLFSHLSSQNIEESAYFDSTWK. A helical transmembrane segment spans residues 424 to 444; it reads GLTALGGLYFMFLVEHVLTLI. The Cytoplasmic segment spans residues 445–657; it reads KQFKDKKKKN…LKAGMTVKQA (213 aa). Residues 464–480 adopt a coiled-coil conformation; it reads VEIKKQLSKYESQLSTN. Residues S471 and S478 each carry the phosphoserine modification. Residues 658 to 678 form a helical membrane-spanning segment; sequence VLYNALSAMLAYLGMATGIFI. At 679–686 the chain is on the extracellular side; sequence GHYAENVS. N-linked (GlcNAc...) asparagine glycosylation is present at N684. Residues 687-707 form a helical membrane-spanning segment; it reads MWIFALTAGLFMYVALVDMVP. Residues 708–724 are Cytoplasmic-facing; sequence EMLHNDASDHGCSRWGY. A helical transmembrane segment spans residues 725–745; it reads FFLQNAGMLLGFGIMLLISIF. Topologically, residues 746 to 755 are extracellular; the sequence is EHKIVFRINF.

Belongs to the ZIP transporter (TC 2.A.5) family. In terms of assembly, interacts with SLC39A10; which triggers cells to undergo EMT and mitosis. Found in a complex with SLC39A6, SLC39A10 and with the 'Ser-727' phosphorylated form of STAT3 throughout mitosis. Found in a complex with SLC39A6, SLC39A10 and with NCAM1; this complex controls NCAM1 phosphorylation and integration into focal adhesion complexes during epithelial-to-mesenchymal transition (EMT). Found in a complex with SLC39A6, SLC39A10 and with GSK3B that controls NCAM1 phosphorylation. Cleaved on the N-terminus before locating to the plasma membrane. In terms of processing, N-glycosylated. Post-translationally, phosphorylated by ZAP70 in response to TCR stimulation leading to its activation. In terms of tissue distribution, highly expressed in the breast, prostate, placenta, kidney, pituitary and corpus callosum. Weakly expressed in heart and intestine. Also highly expressed in cells derived from an adenocarcinoma of the cervix and lung carcinoma.

It localises to the cell membrane. The protein resides in the cell projection. Its subcellular location is the lamellipodium membrane. It is found in the membrane raft. The protein localises to the apical cell membrane. The catalysed reaction is Zn(2+)(in) = Zn(2+)(out). In terms of biological role, zinc-influx transporter which plays a role in zinc homeostasis and in the induction of epithelial-to-mesenchymal transition (EMT). When associated with SLC39A10, the heterodimer formed by SLC39A10 and SLC39A6 mediates cellular zinc uptake to trigger cells to undergo epithelial- to-mesenchymal transition (EMT). The SLC39A10-SLC39A6 heterodimer also controls NCAM1 phosphorylation and its integration into focal adhesion complexes during EMT. Zinc influx inactivates GSK3B, enabling unphosphorylated SNAI1 in the nucleus to down-regulate adherence genes such as CDH1, causing loss of cell adherence. In addition, the SLC39A10-SLC39A6 heterodimer plays an essentiel role in initiating mitosis by importing zinc into cells to initiate a pathway resulting in the onset of mitosis. Participates in the T-cell receptor signaling regulation by mediating cellular zinc uptake into activated lymphocytes. Regulates the zinc influx necessary for proper meiotic progression to metaphase II (MII) that allows the oocyte-to-egg transition. In Homo sapiens (Human), this protein is Zinc transporter ZIP6.